A 296-amino-acid chain; its full sequence is Cutinase est1 (296 aa).

The first 35 residues, 1–35, serve as a signal peptide directing secretion; sequence MSVTTPRREASLLSRAVAVAAAAAATVALAAPAQA. The tract at residues 36-57 is disordered; that stretch reads ANPYERGPNPTESMLEARSGPF. Y95 contacts poly(ethylene terephthalate). The active-site Nucleophile is the S165. Positions 166 and 190 each coordinate poly(ethylene terephthalate). Residues D211 and H243 each act as charge relay system in the active site. The cysteines at positions 276 and 294 are disulfide-linked.

Belongs to the AB hydrolase superfamily. In terms of assembly, monomer.

It localises to the secreted. Its subcellular location is the periplasm. It carries out the reaction (ethylene terephthalate)(n) + H2O = (ethylene terephthalate)(n-1) + 4-[(2-hydroxyethoxy)carbonyl]benzoate + H(+). The enzyme catalyses a butanoate ester + H2O = an aliphatic alcohol + butanoate + H(+). It catalyses the reaction cutin + H2O = cutin monomers.. In terms of biological role, catalyzes the hydrolysis of cutin, a polyester that forms the structure of plant cuticle. Shows esterase activity towards p-nitrophenol-linked aliphatic esters (pNP-aliphatic esters). Capable of degrading the plastic poly(ethylene terephthalate) (PET), the most abundant polyester plastic in the world. Can also depolymerize the synthetic polyester poly(epsilon-caprolactone) (PCL). This is Cutinase est1 from Thermobifida alba (Thermomonospora alba).